Here is a 427-residue protein sequence, read N- to C-terminus: Homoserine O-acetyltransferase FUB5 (427 aa).

The span at 1–13 shows a compositional bias: low complexity; the sequence is MTTTTTAPALPTP. The interval 1-35 is disordered; the sequence is MTTTTTAPALPTPIHDGLGNGTTYERSIPRPVNPF. The region spanning 77–400 is the AB hydrolase-1 domain; sequence NVMIICHALS…VSDDGHDAFL (324 aa). Ser175 serves as the catalytic Nucleophile. The segment at 260 to 297 is disordered; it reads RFGRDTGNKKKAKNKGSETLPSNSTPIHSQGGADETPV. A compositionally biased stretch (polar residues) spans 276 to 287; the sequence is SETLPSNSTPIH. Catalysis depends on residues Asp367 and His396.

Belongs to the AB hydrolase superfamily. MetX family.

It catalyses the reaction L-homoserine + acetyl-CoA = O-acetyl-L-homoserine + CoA. The protein operates within mycotoxin biosynthesis. Functionally, homoserine O-acetyltransferase; part of the gene cluster that mediates the biosynthesis of fusaric acid, a mycotoxin with low to moderate toxicity to animals and humans, but with high phytotoxic properties. L-aspartate is suggested as fusaric acid amino acid precursor that is activated and further processed to O-acetyl-L-homoserine by cluster enzymes aspartate kinase FUB3 and homoserine O-acetyltransferase FUB5, as well as enzymes of the primary metabolism. The polyketide synthase (PKS) FUB1 generates the triketide trans-2-hexenal which is presumptively released by the hydrolase FUB4 and linked to the NRPS-bound amino acid precursor by NAD(P)-dependent dehydrogenase FUB6. FUB1, FUB4, and the non-canonical NRPS Fub8 may form an enzyme complex. Further processing of the NRPS-bound intermediate might be carried out by FUB6 and the sulfhydrylase FUB7, enabling a spontaneous electrocyclization to close the carbon backbone of fusaric acid. Dihydrofusaric acid is likely to be released via reduction by the thioester reductase (TR) domain of FUB8 whereupon the final oxidation to fusaric acid may (also) be performed by the FMN-dependent dehydrogenase FUB9. This Gibberella fujikuroi (strain CBS 195.34 / IMI 58289 / NRRL A-6831) (Bakanae and foot rot disease fungus) protein is Homoserine O-acetyltransferase FUB5.